The primary structure comprises 425 residues: Serine--tRNA ligase (425 aa).

233-235 (TAE) serves as a coordination point for L-serine. 264–266 (RRE) contacts ATP. Glu287 lines the L-serine pocket. 351–354 (EISS) provides a ligand contact to ATP. Ser385 lines the L-serine pocket.

Belongs to the class-II aminoacyl-tRNA synthetase family. Type-1 seryl-tRNA synthetase subfamily. Homodimer. The tRNA molecule binds across the dimer.

The protein localises to the cytoplasm. It carries out the reaction tRNA(Ser) + L-serine + ATP = L-seryl-tRNA(Ser) + AMP + diphosphate + H(+). The catalysed reaction is tRNA(Sec) + L-serine + ATP = L-seryl-tRNA(Sec) + AMP + diphosphate + H(+). Its pathway is aminoacyl-tRNA biosynthesis; selenocysteinyl-tRNA(Sec) biosynthesis; L-seryl-tRNA(Sec) from L-serine and tRNA(Sec): step 1/1. Its function is as follows. Catalyzes the attachment of serine to tRNA(Ser). Is also able to aminoacylate tRNA(Sec) with serine, to form the misacylated tRNA L-seryl-tRNA(Sec), which will be further converted into selenocysteinyl-tRNA(Sec). This is Serine--tRNA ligase from Prochlorococcus marinus (strain SARG / CCMP1375 / SS120).